The chain runs to 236 residues: Heme oxygenase (236 aa).

Residue H17 participates in heme b binding.

The protein belongs to the heme oxygenase family.

The protein resides in the plastid. It localises to the chloroplast. The catalysed reaction is heme b + 3 reduced [NADPH--hemoprotein reductase] + 3 O2 = biliverdin IXalpha + CO + Fe(2+) + 3 oxidized [NADPH--hemoprotein reductase] + 3 H2O + H(+). Its function is as follows. Catalyzes the opening of the heme ring with the release of iron. Key enzyme in the synthesis of the chromophoric part of the photosynthetic antennae. This Porphyra purpurea (Red seaweed) protein is Heme oxygenase (pbsA).